The chain runs to 444 residues: Tubulin beta chain (444 aa).

The MREI motif motif lies at 1-4 (MREI). Residues Gln-11, Glu-69, Ser-138, Gly-142, Thr-143, Gly-144, Asn-204, and Asn-226 each contribute to the GTP site. Glu-69 lines the Mg(2+) pocket. The segment at 421-444 (EYQQYQDATAEEEEDFNEEAEEEA) is disordered. The span at 429 to 444 (TAEEEEDFNEEAEEEA) shows a compositional bias: acidic residues. Position 438 is a 5-glutamyl polyglutamate (Glu-438).

This sequence belongs to the tubulin family. In terms of assembly, dimer of alpha and beta chains. A typical microtubule is a hollow water-filled tube with an outer diameter of 25 nm and an inner diameter of 15 nM. Alpha-beta heterodimers associate head-to-tail to form protofilaments running lengthwise along the microtubule wall with the beta-tubulin subunit facing the microtubule plus end conferring a structural polarity. Microtubules usually have 13 protofilaments but different protofilament numbers can be found in some organisms and specialized cells. Mg(2+) serves as cofactor. In terms of processing, some glutamate residues at the C-terminus are polyglycylated, resulting in polyglycine chains on the gamma-carboxyl group. Glycylation is mainly limited to tubulin incorporated into axonemes (cilia and flagella) whereas glutamylation is prevalent in neuronal cells, centrioles, axonemes, and the mitotic spindle. Both modifications can coexist on the same protein on adjacent residues, and lowering polyglycylation levels increases polyglutamylation, and reciprocally. The precise function of polyglycylation is still unclear. Some glutamate residues at the C-terminus are polyglutamylated, resulting in polyglutamate chains on the gamma-carboxyl group. Polyglutamylation plays a key role in microtubule severing by spastin (SPAST). SPAST preferentially recognizes and acts on microtubules decorated with short polyglutamate tails: severing activity by SPAST increases as the number of glutamates per tubulin rises from one to eight, but decreases beyond this glutamylation threshold.

It localises to the cytoplasm. It is found in the cytoskeleton. Tubulin is the major constituent of microtubules, a cylinder consisting of laterally associated linear protofilaments composed of alpha- and beta-tubulin heterodimers. Microtubules grow by the addition of GTP-tubulin dimers to the microtubule end, where a stabilizing cap forms. Below the cap, tubulin dimers are in GDP-bound state, owing to GTPase activity of alpha-tubulin. The sequence is that of Tubulin beta chain (tubb) from Xenopus laevis (African clawed frog).